We begin with the raw amino-acid sequence, 358 residues long: Zinc-type alcohol dehydrogenase-like protein YogA (358 aa).

Belongs to the zinc-containing alcohol dehydrogenase family. Quinone oxidoreductase subfamily.

It functions in the pathway secondary metabolite biosynthesis. In terms of biological role, zinc-type alcohol dehydrogenase-like protein; part of the gene cluster that mediates the biosynthesis of phomenoic acid, a long chain aliphatic carboxylic acid that does not appear to be essential for pathogenicity but may play a role in allowing to outcompete other fungi in the environmental niche via its antifungal properties. The polyketide synthase produces the long methylated aliphatic carboxylic acid chain of phomenoic acid. The cluster-specific cytochrome P450 monooxygenase may then hydroxylate the methyl group of carbon 31. The putative dehydrogenase YogA, which has no obvious role in phomenoic acid biosynthesis, may further modify phomenoic acid to produce a compound not identified yet. This is Zinc-type alcohol dehydrogenase-like protein YogA from Leptosphaeria maculans (strain JN3 / isolate v23.1.3 / race Av1-4-5-6-7-8) (Blackleg fungus).